The following is a 509-amino-acid chain: 2-isopropylmalate synthase (509 aa).

One can recognise a Pyruvate carboxyltransferase domain in the interval 5-267 (IQIFDTTLRD…QTALNLEETK (263 aa)). Residues aspartate 14, histidine 202, histidine 204, and asparagine 238 each coordinate Mn(2+). Residues 391–509 (KLETLQLQYV…AAENVEKVGN (119 aa)) are regulatory domain.

The protein belongs to the alpha-IPM synthase/homocitrate synthase family. LeuA type 1 subfamily. In terms of assembly, homodimer. The cofactor is Mn(2+).

It localises to the cytoplasm. It catalyses the reaction 3-methyl-2-oxobutanoate + acetyl-CoA + H2O = (2S)-2-isopropylmalate + CoA + H(+). The protein operates within amino-acid biosynthesis; L-leucine biosynthesis; L-leucine from 3-methyl-2-oxobutanoate: step 1/4. Its function is as follows. Catalyzes the condensation of the acetyl group of acetyl-CoA with 3-methyl-2-oxobutanoate (2-ketoisovalerate) to form 3-carboxy-3-hydroxy-4-methylpentanoate (2-isopropylmalate). The sequence is that of 2-isopropylmalate synthase from Staphylococcus aureus (strain MRSA252).